The primary structure comprises 273 residues: Holocytochrome c-type synthase (273 aa).

Low complexity predominate over residues 1 to 18; it reads MGLSASSPAATAQSAAEP. The tract at residues 1–39 is disordered; it reads MGLSASSPAATAQSAAEPSKQHQVASPPSECPMHQEKMR. HRM repeat units lie at residues 30–35 and 40–45; these read ECPMHQ and GCPMHM.

Belongs to the cytochrome c-type heme lyase family.

Its subcellular location is the mitochondrion inner membrane. The catalysed reaction is holo-[cytochrome c] = apo-[cytochrome c] + heme b. In terms of biological role, lyase that catalyzes the covalent linking of the heme group to the cytochrome C apoprotein to produce the mature functional cytochrome. In Gallus gallus (Chicken), this protein is Holocytochrome c-type synthase (HCCS).